The sequence spans 165 residues: Small ribosomal subunit protein uS5 (165 aa).

The S5 DRBM domain occupies 13–76 (LEEKVLVVNR…EAAKKNLMKI (64 aa)).

The protein belongs to the universal ribosomal protein uS5 family. As to quaternary structure, part of the 30S ribosomal subunit. Contacts proteins S4 and S8.

Functionally, with S4 and S12 plays an important role in translational accuracy. In terms of biological role, located at the back of the 30S subunit body where it stabilizes the conformation of the head with respect to the body. This is Small ribosomal subunit protein uS5 from Chlamydia pneumoniae (Chlamydophila pneumoniae).